The primary structure comprises 160 residues: Prostaglandin E synthase 3 (160 aa).

Residues 1–90 form the CS domain; the sequence is MQPASAKWYD…ESGQSWPRLT (90 aa). Lysine 33 bears the N6-acetyllysine mark. Residue lysine 35 forms a Glycyl lysine isopeptide (Lys-Gly) (interchain with G-Cter in SUMO2) linkage. Serine 44 is subject to Phosphoserine. Lysine 65 participates in a covalent cross-link: Glycyl lysine isopeptide (Lys-Gly) (interchain with G-Cter in SUMO2). 4 positions are modified to phosphoserine: serine 85, serine 100, serine 113, and serine 118. The tract at residues 118–160 is disordered; it reads SNFDRFSEMMDHMGGDEDVDLPEVDGADDDSQDSDDEKMPDLE. The segment covering 122–132 has biased composition (basic and acidic residues); that stretch reads RFSEMMDHMGG. The segment covering 133–153 has biased composition (acidic residues); the sequence is DEDVDLPEVDGADDDSQDSDD. A phosphoserine mark is found at serine 148 and serine 151. Positions 157-160 match the PXLE motif motif; it reads PDLE.

This sequence belongs to the p23/wos2 family. In terms of assembly, probably forms a complex composed of chaperones HSP90 and HSP70, co-chaperones STIP1/HOP, CDC37, PPP5C, PTGES3/p23, TSC1 and client protein TSC2. Binds to the progesterone receptor. Interacts with TERT; the interaction, together with HSP90AA1, is required for correct assembly and stabilization of the telomerase holoenzyme complex. Interacts (via PXLE motif) with EGLN1/PHD2, recruiting EGLN1/PHD2 to the HSP90 pathway to facilitate HIF alpha proteins hydroxylation. Interacts with HSP90AA1, FLCN, FNIP1 and FNIP2. Post-translationally, proteolytically cleaved by caspase-7 (CASP7) in response to apoptosis, leading to its inactivation. As to expression, expressed in testis, kidney, bladder and ovary.

The protein localises to the cytoplasm. The enzyme catalyses prostaglandin H2 = prostaglandin E2. It functions in the pathway lipid metabolism; prostaglandin biosynthesis. In terms of biological role, cytosolic prostaglandin synthase that catalyzes the oxidoreduction of prostaglandin endoperoxide H2 (PGH2) to prostaglandin E2 (PGE2). Molecular chaperone that localizes to genomic response elements in a hormone-dependent manner and disrupts receptor-mediated transcriptional activation, by promoting disassembly of transcriptional regulatory complexes. Facilitates HIF alpha proteins hydroxylation via interaction with EGLN1/PHD2, leading to recruit EGLN1/PHD2 to the HSP90 pathway. The polypeptide is Prostaglandin E synthase 3 (Ptges3) (Mus musculus (Mouse)).